The primary structure comprises 156 residues: Small ribosomal subunit protein uS7 (156 aa).

The protein belongs to the universal ribosomal protein uS7 family. In terms of assembly, part of the 30S ribosomal subunit. Contacts proteins S9 and S11.

One of the primary rRNA binding proteins, it binds directly to 16S rRNA where it nucleates assembly of the head domain of the 30S subunit. Is located at the subunit interface close to the decoding center, probably blocks exit of the E-site tRNA. The polypeptide is Small ribosomal subunit protein uS7 (Afipia carboxidovorans (strain ATCC 49405 / DSM 1227 / KCTC 32145 / OM5) (Oligotropha carboxidovorans)).